We begin with the raw amino-acid sequence, 251 residues long: Adapter protein MecA (251 aa).

This sequence belongs to the MecA family. In terms of assembly, homodimer.

Its function is as follows. Enables the recognition and targeting of unfolded and aggregated proteins to the ClpC protease or to other proteins involved in proteolysis. In Streptococcus agalactiae serotype III (strain NEM316), this protein is Adapter protein MecA.